Reading from the N-terminus, the 343-residue chain is Dihydroorotase (343 aa).

Residues histidine 13 and histidine 15 each contribute to the Zn(2+) site. Substrate-binding positions include histidine 15–arginine 17 and asparagine 41. 3 residues coordinate Zn(2+): lysine 99, histidine 136, and histidine 174. Position 99 is an N6-carboxylysine (lysine 99). Histidine 136 provides a ligand contact to substrate. Residue leucine 219 participates in substrate binding. Aspartate 247 contributes to the Zn(2+) binding site. Residue aspartate 247 is part of the active site. Substrate contacts are provided by histidine 251 and alanine 263.

The protein belongs to the metallo-dependent hydrolases superfamily. DHOase family. Class II DHOase subfamily. In terms of assembly, homodimer. It depends on Zn(2+) as a cofactor.

The enzyme catalyses (S)-dihydroorotate + H2O = N-carbamoyl-L-aspartate + H(+). It functions in the pathway pyrimidine metabolism; UMP biosynthesis via de novo pathway; (S)-dihydroorotate from bicarbonate: step 3/3. In terms of biological role, catalyzes the reversible cyclization of carbamoyl aspartate to dihydroorotate. This Shewanella baltica (strain OS195) protein is Dihydroorotase.